The chain runs to 260 residues: tRNA pseudouridine synthase A (260 aa).

The active-site Nucleophile is the aspartate 52. Substrate is bound at residue tyrosine 111.

Belongs to the tRNA pseudouridine synthase TruA family. In terms of assembly, homodimer.

The enzyme catalyses uridine(38/39/40) in tRNA = pseudouridine(38/39/40) in tRNA. Its function is as follows. Formation of pseudouridine at positions 38, 39 and 40 in the anticodon stem and loop of transfer RNAs. The protein is tRNA pseudouridine synthase A of Beijerinckia indica subsp. indica (strain ATCC 9039 / DSM 1715 / NCIMB 8712).